The following is a 102-amino-acid chain: Iron-sulfur cluster assembly protein CyaY (102 aa).

The protein belongs to the frataxin family.

Functionally, involved in iron-sulfur (Fe-S) cluster assembly. May act as a regulator of Fe-S biogenesis. In Actinobacillus succinogenes (strain ATCC 55618 / DSM 22257 / CCUG 43843 / 130Z), this protein is Iron-sulfur cluster assembly protein CyaY.